Reading from the N-terminus, the 204-residue chain is Protease (204 aa).

Active-site residues include His-54, Asp-71, and Cys-122.

This sequence belongs to the peptidase C5 family. In terms of assembly, interacts with protease cofactor pVI-C; this interaction is necessary for protease activation.

Its subcellular location is the virion. It is found in the host nucleus. The enzyme catalyses Cleaves proteins of the adenovirus and its host cell at two consensus sites: -Yaa-Xaa-Gly-Gly-|-Xaa- and -Yaa-Xaa-Gly-Xaa-|-Gly- (in which Yaa is Met, Ile or Leu, and Xaa is any amino acid).. Requires DNA and protease cofactor for maximal activation. Inside nascent virions, becomes partially activated by binding to the viral DNA, allowing it to cleave the cofactor that binds to the protease and fully activates it. Actin, like the viral protease cofactor, seems to act as a cofactor in the cleavage of cytokeratin 18 and of actin itself. Functionally, cleaves viral precursor proteins (pTP, pIIIa, pVI, pVII, pVIII, and pX) inside newly assembled particles giving rise to mature virions. Protease complexed to its cofactor slides along the viral DNA to specifically locate and cleave the viral precursors. Mature virions have a weakened organization compared to the unmature virions, thereby facilitating subsequent uncoating. Without maturation, the particle lacks infectivity and is unable to uncoat. Late in adenovirus infection, in the cytoplasm, may participate in the cytoskeleton destruction. Cleaves host cell cytoskeletal keratins K7 and K18. The protein is Protease of Bos taurus (Bovine).